Consider the following 90-residue polypeptide: Small ribosomal subunit protein bS16 (90 aa).

It belongs to the bacterial ribosomal protein bS16 family.

This Moorella thermoacetica (strain ATCC 39073 / JCM 9320) protein is Small ribosomal subunit protein bS16.